A 425-amino-acid chain; its full sequence is uncharacterized protein (425 aa).

12 consecutive transmembrane segments (helical) span residues 15–35, 48–68, 84–104, 107–127, 149–169, 174–194, 225–245, 271–291, 295–315, 331–351, 370–390, and 395–415; these read LICA…SQML, LIGA…WAPL, MLLS…FDPL, LGTV…QDIV, INAY…LAAI, TVFL…LFLA, VIQA…DSFA, ALWS…KLGI, LWLF…LAAF, VVIA…VAFM, LSAL…GAVG, and FWFC…VAPL.

To E.coli AmpG and yeast YBR220c.

It localises to the cell inner membrane. This is an uncharacterized protein from Haemophilus influenzae (strain ATCC 51907 / DSM 11121 / KW20 / Rd).